Reading from the N-terminus, the 658-residue chain is UvrABC system protein B (658 aa).

The Helicase ATP-binding domain occupies 25–416 (QFIHNGAQYS…QEHIAEQIIR (392 aa)). ATP is bound at residue 38–45 (GVTGSGKT). The short motif at 91–114 (HFDYYQPEAYIPRRDLFIEKDSSI) is the Beta-hairpin element. Residues 433–607 (AVLDLYDEIK…ELKIESSGLS (175 aa)) enclose the Helicase C-terminal domain. A UVR domain is found at 623 to 658 (ESIIKELNIKMHQAAKALEFEEAARLRDEIARIRTM).

Belongs to the UvrB family. In terms of assembly, forms a heterotetramer with UvrA during the search for lesions. Interacts with UvrC in an incision complex.

Its subcellular location is the cytoplasm. The UvrABC repair system catalyzes the recognition and processing of DNA lesions. A damage recognition complex composed of 2 UvrA and 2 UvrB subunits scans DNA for abnormalities. Upon binding of the UvrA(2)B(2) complex to a putative damaged site, the DNA wraps around one UvrB monomer. DNA wrap is dependent on ATP binding by UvrB and probably causes local melting of the DNA helix, facilitating insertion of UvrB beta-hairpin between the DNA strands. Then UvrB probes one DNA strand for the presence of a lesion. If a lesion is found the UvrA subunits dissociate and the UvrB-DNA preincision complex is formed. This complex is subsequently bound by UvrC and the second UvrB is released. If no lesion is found, the DNA wraps around the other UvrB subunit that will check the other stand for damage. In Helicobacter hepaticus (strain ATCC 51449 / 3B1), this protein is UvrABC system protein B.